A 201-amino-acid polypeptide reads, in one-letter code: ATP-dependent dethiobiotin synthetase BioD (201 aa).

11–16 (DVGKTH) is a binding site for ATP. A Mg(2+)-binding site is contributed by threonine 15. Lysine 31 is a catalytic residue. ATP-binding positions include aspartate 40 and 93-96 (ELAG). Aspartate 40 and glutamate 93 together coordinate Mg(2+).

It belongs to the dethiobiotin synthetase family. Homodimer. The cofactor is Mg(2+).

The protein resides in the cytoplasm. It carries out the reaction (7R,8S)-7,8-diammoniononanoate + CO2 + ATP = (4R,5S)-dethiobiotin + ADP + phosphate + 3 H(+). The protein operates within cofactor biosynthesis; biotin biosynthesis; biotin from 7,8-diaminononanoate: step 1/2. Its function is as follows. Catalyzes a mechanistically unusual reaction, the ATP-dependent insertion of CO2 between the N7 and N8 nitrogen atoms of 7,8-diaminopelargonic acid (DAPA, also called 7,8-diammoniononanoate) to form a ureido ring. This is ATP-dependent dethiobiotin synthetase BioD from Campylobacter jejuni subsp. jejuni serotype O:6 (strain 81116 / NCTC 11828).